The primary structure comprises 110 residues: Translation initiation factor 1A 3 (110 aa).

The interval 1–29 (MIRKRQSGSNKSVSSGNNQEVTRVRTPRK) is disordered. A compositionally biased stretch (low complexity) spans 7–18 (SGSNKSVSSGNN). An S1-like domain is found at 22–96 (TRVRTPRKDR…SKADVIWKYT (75 aa)).

It belongs to the eIF-1A family.

Its function is as follows. Seems to be required for maximal rate of protein biosynthesis. Enhances ribosome dissociation into subunits and stabilizes the binding of the initiator Met-tRNA(I) to 40 S ribosomal subunits. This is Translation initiation factor 1A 3 (eIF1A3) from Methanosarcina acetivorans (strain ATCC 35395 / DSM 2834 / JCM 12185 / C2A).